We begin with the raw amino-acid sequence, 102 residues long: PE family immunomodulator PE5 (102 aa).

Residues 3–92 (LRVVPEGLAA…GASYLAGDAA (90 aa)) enclose the PE domain.

The protein belongs to the mycobacterial PE family.

The protein localises to the secreted. The protein resides in the cell envelope. Its subcellular location is the cell surface. In terms of biological role, important for the siderophore-mediated iron-acquisition function of ESX-3. May play a pivotal role in the evasion of host immune response by M.tuberculosis. Mediates production of IL-10 via activation of the p38 and ERK1/2 mitogen-activated protein kinase (MAPK) signaling pathways. In Mycobacterium tuberculosis (strain ATCC 25618 / H37Rv), this protein is PE family immunomodulator PE5.